Here is a 205-residue protein sequence, read N- to C-terminus: Isochorismatase domain-containing protein 2 (205 aa).

This sequence belongs to the isochorismatase family.

The chain is Isochorismatase domain-containing protein 2 (isoc2) from Xenopus laevis (African clawed frog).